The sequence spans 503 residues: Maturase K (503 aa).

It belongs to the intron maturase 2 family. MatK subfamily.

It localises to the plastid. The protein resides in the chloroplast. Functionally, usually encoded in the trnK tRNA gene intron. Probably assists in splicing its own and other chloroplast group II introns. This is Maturase K from Liquidambar orientalis (Oriental sweet gum).